The chain runs to 874 residues: Leucine--tRNA ligase (874 aa).

The short motif at 43 to 53 is the 'HIGH' region element; the sequence is PYPSGRIHIGH. The 'KMSKS' region motif lies at 630–634; sequence KMSKS. Lysine 633 contributes to the ATP binding site.

It belongs to the class-I aminoacyl-tRNA synthetase family.

The protein resides in the cytoplasm. It catalyses the reaction tRNA(Leu) + L-leucine + ATP = L-leucyl-tRNA(Leu) + AMP + diphosphate. The protein is Leucine--tRNA ligase of Bradyrhizobium sp. (strain BTAi1 / ATCC BAA-1182).